Consider the following 1336-residue polypeptide: Mating factor M secretion protein mam1 (1336 aa).

Residues 1-29 (MHIHSDLSLPQFEHASIDPPSYSPQKSSF) form a disordered region. Residues 1-91 (MHIHSDLSLP…ELAGVSSWSD (91 aa)) are Cytoplasmic-facing. A helical membrane pass occupies residues 92-112 (FFYLFHFSDIPLIFGTLIFTC). One can recognise an ABC transmembrane type-1 1 domain in the interval 104-396 (IFGTLIFTCL…ILPAIPDLIK (293 aa)). Over 113 to 153 (LSAALEPLMTWTTGKVFDALSQYATSQITLGKMISLINFNS) the chain is Extracellular. Residues 154–174 (LLITIFGLASCVFSFGVRFLW) traverse the membrane as a helical segment. The Cytoplasmic portion of the chain corresponds to 175–250 (QYLSAIAGKR…SCLIISFRYS (76 aa)). A helical membrane pass occupies residues 251 to 271 (WSLTLVVLASYPIIILVVGFI). Residues 272–778 (NSFLSSAYEK…KSIWKVKKLR (507 aa)) lie on the Extracellular side of the membrane. The 236-residue stretch at 433 to 668 (FRFDNVSFAY…EDFENNVSID (236 aa)) folds into the ABC transporter 1 domain. Residues Asn437 and Asn454 are each glycosylated (N-linked (GlcNAc...) asparagine). An ATP-binding site is contributed by 469-476 (GPSGSGKS). Residues Asn536, Asn664, and Asn697 are each glycosylated (N-linked (GlcNAc...) asparagine). The helical transmembrane segment at 779–799 (WFFLLGLLTSLIQGASVPIFA) threads the bilayer. The 286-residue stretch at 781-1066 (FLLGLLTSLI…CIMSLPNVSA (286 aa)) folds into the ABC transmembrane type-1 2 domain. Topologically, residues 800 to 897 (YVISKCLNLF…ISDMRNMISS (98 aa)) are cytoplasmic. Residues 898-918 (LIEEVFIAFTMAIIGIAWSFA) traverse the membrane as a helical segment. At 919–1336 (TGWRLAAVLV…KLIHRGEWIE (418 aa)) the chain is on the extracellular side. Residues Asn1011, Asn1063, and Asn1120 are each glycosylated (N-linked (GlcNAc...) asparagine). An ABC transporter 2 domain is found at 1099–1331 (IEFDGVSFAY…HTHFWKLIHR (233 aa)). 1135 to 1142 (GISGSGKS) contributes to the ATP binding site. N-linked (GlcNAc...) asparagine glycosylation is found at Asn1235 and Asn1280.

The protein belongs to the ABC transporter superfamily. Alpha-factor sex pheromone exporter (TC 3.A.1.206) family.

The protein localises to the membrane. Its function is as follows. Required in S.pombe M (minus) cells for production of M-factor pheromone. Involved in the transport of the farnesyl-derivation of the M-factor pheromone. The chain is Mating factor M secretion protein mam1 (mam1) from Schizosaccharomyces pombe (strain 972 / ATCC 24843) (Fission yeast).